Consider the following 322-residue polypeptide: Arginase (322 aa).

Residues His-113, Asp-141, His-143, and Asp-145 each contribute to the Mn(2+) site. Substrate is bound by residues 143 to 147 (HADIN), 154 to 156 (SGN), and Asp-200. Mn(2+)-binding residues include Asp-247 and Asp-249. Residues Thr-261 and Glu-292 each coordinate substrate.

This sequence belongs to the arginase family. In terms of assembly, homotrimer. It depends on Mn(2+) as a cofactor.

It catalyses the reaction L-arginine + H2O = urea + L-ornithine. It functions in the pathway nitrogen metabolism; urea cycle; L-ornithine and urea from L-arginine: step 1/1. This Coccidioides immitis (strain RS) (Valley fever fungus) protein is Arginase (ARG).